We begin with the raw amino-acid sequence, 202 residues long: Sterile alpha motif domain-containing protein 10 (202 aa).

In terms of domain architecture, SAM spans 118–184 (WSQQDVCKWL…LQQVLRLQVR (67 aa)).

The protein is Sterile alpha motif domain-containing protein 10 (SAMD10) of Homo sapiens (Human).